Consider the following 546-residue polypeptide: Chaperonin GroEL (546 aa).

ATP-binding positions include 29–32 (TMGP), Lys-50, 86–90 (DGTTT), Gly-412, 476–478 (NAA), and Asp-492.

The protein belongs to the chaperonin (HSP60) family. Forms a cylinder of 14 subunits composed of two heptameric rings stacked back-to-back. Interacts with the co-chaperonin GroES.

It localises to the cytoplasm. It carries out the reaction ATP + H2O + a folded polypeptide = ADP + phosphate + an unfolded polypeptide.. In terms of biological role, together with its co-chaperonin GroES, plays an essential role in assisting protein folding. The GroEL-GroES system forms a nano-cage that allows encapsulation of the non-native substrate proteins and provides a physical environment optimized to promote and accelerate protein folding. Its function is as follows. May play a protective role against the defense mechanisms generated by the infected macrophages. In Legionella micdadei (Tatlockia micdadei), this protein is Chaperonin GroEL.